The chain runs to 602 residues: Aspartate--tRNA(Asp/Asn) ligase (602 aa).

Glu187 lines the L-aspartate pocket. An aspartate region spans residues 211–214 (QQFK). 2 residues coordinate L-aspartate: Arg233 and His461. Position 233–235 (233–235 (RDE)) interacts with ATP. Glu495 provides a ligand contact to ATP. L-aspartate is bound at residue Arg502. Residue 547–550 (GLDR) participates in ATP binding.

It belongs to the class-II aminoacyl-tRNA synthetase family. Type 1 subfamily. Homodimer.

Its subcellular location is the cytoplasm. The enzyme catalyses tRNA(Asx) + L-aspartate + ATP = L-aspartyl-tRNA(Asx) + AMP + diphosphate. Aspartyl-tRNA synthetase with relaxed tRNA specificity since it is able to aspartylate not only its cognate tRNA(Asp) but also tRNA(Asn). Reaction proceeds in two steps: L-aspartate is first activated by ATP to form Asp-AMP and then transferred to the acceptor end of tRNA(Asp/Asn). In Chlorobium phaeovibrioides (strain DSM 265 / 1930) (Prosthecochloris vibrioformis (strain DSM 265)), this protein is Aspartate--tRNA(Asp/Asn) ligase.